Here is a 688-residue protein sequence, read N- to C-terminus: Polyribonucleotide nucleotidyltransferase (688 aa).

Residues Asp-484 and Asp-490 each contribute to the Mg(2+) site. A KH domain is found at 550–609; the sequence is PTTEIFNVAPDKIVEIIGQGGRVIKEIVEKFEVKIDLNKPSGEVKIMGNKERVLKTKEFI. The S1 motif domain maps to 626-688; the sequence is DEVLEAQVKR…NKGKIALDLA (63 aa).

It belongs to the polyribonucleotide nucleotidyltransferase family. The cofactor is Mg(2+).

Its subcellular location is the cytoplasm. It catalyses the reaction RNA(n+1) + phosphate = RNA(n) + a ribonucleoside 5'-diphosphate. Involved in mRNA degradation. Catalyzes the phosphorolysis of single-stranded polyribonucleotides processively in the 3'- to 5'-direction. This Helicobacter pylori (strain ATCC 700392 / 26695) (Campylobacter pylori) protein is Polyribonucleotide nucleotidyltransferase.